The chain runs to 452 residues: Histone acetyltransferase type B subunit 2 (452 aa).

WD repeat units follow at residues 155 to 195 (YEDG…NSKE), 205 to 245 (HHTK…SDGS), 256 to 296 (HHDA…NKAA), 300 to 340 (KESR…TPIS), 344 to 384 (SHCD…DDLS), and 401 to 441 (GHSS…SNDE).

Belongs to the WD repeat RBAP46/RBAP48/MSI1 family. In terms of assembly, component of the HAT-B complex composed of at least HAT1 and HAT2. The HAT-B complex binds to histone H4 tail.

The protein resides in the cytoplasm. It is found in the nucleus. Its function is as follows. Regulatory subunit of the histone acetylase B (HAT-B) complex. The complex acetylates 'Lys-12' of histone H4 which is required for telomeric silencing. This Yarrowia lipolytica (strain CLIB 122 / E 150) (Yeast) protein is Histone acetyltransferase type B subunit 2 (HAT2).